The following is a 157-amino-acid chain: MPSVESFELDHNAVVAPYVRHCGVHKVGTDGVVNKFDIRFCQPNKQAMKPDTIHTLEHLLAFTIRSHAEKYDHFDIIDISPMGCQTGYYLVVSGEPTSAEIVDLLEDTMKEAVEITEIPAANEKQCGQAKLHDLEGAKRLMRFWLSQDKEELLKVFG.

Fe cation-binding residues include histidine 54, histidine 58, and cysteine 126.

Belongs to the LuxS family. As to quaternary structure, homodimer. It depends on Fe cation as a cofactor.

The enzyme catalyses S-(5-deoxy-D-ribos-5-yl)-L-homocysteine = (S)-4,5-dihydroxypentane-2,3-dione + L-homocysteine. Functionally, involved in the synthesis of autoinducer 2 (AI-2) which is secreted by bacteria and is used to communicate both the cell density and the metabolic potential of the environment. The regulation of gene expression in response to changes in cell density is called quorum sensing. Catalyzes the transformation of S-ribosylhomocysteine (RHC) to homocysteine (HC) and 4,5-dihydroxy-2,3-pentadione (DPD). This chain is S-ribosylhomocysteine lyase (luxS), found in Bacillus subtilis (strain 168).